A 310-amino-acid chain; its full sequence is HPr kinase/phosphorylase (310 aa).

Residues His-138 and Lys-159 contribute to the active site. Residue 153–160 (GDSGIGKS) participates in ATP binding. Ser-160 serves as a coordination point for Mg(2+). Asp-177 functions as the Proton acceptor; for phosphorylation activity. Proton donor; for dephosphorylation activity in the catalytic mechanism. The tract at residues 201-210 (LEIRGVGIID) is important for the catalytic mechanism of both phosphorylation and dephosphorylation. Mg(2+) is bound at residue Glu-202. Residue Arg-243 is part of the active site. The tract at residues 264–269 (PVQTGR) is important for the catalytic mechanism of dephosphorylation.

It belongs to the HPrK/P family. Homohexamer. The cofactor is Mg(2+). Requires Mn(2+) as cofactor.

The enzyme catalyses [HPr protein]-L-serine + ATP = [HPr protein]-O-phospho-L-serine + ADP + H(+). It catalyses the reaction [HPr protein]-O-phospho-L-serine + phosphate + H(+) = [HPr protein]-L-serine + diphosphate. Kinase activity is inhibited by inorganic phosphate (Pi). In contrast to many other bacteria, neither kinase activity nor phosphorylase activity is affected by fructose 1,6-bisphosphate (FBP). Its function is as follows. Catalyzes the ATP- as well as probably the pyrophosphate-dependent phosphorylation of 'Ser-46' in HPr, a phosphocarrier protein of the phosphoenolpyruvate-dependent sugar phosphotransferase system (PTS). HprK/P also catalyzes the pyrophosphate-producing, inorganic phosphate-dependent dephosphorylation (phosphorolysis) of seryl-phosphorylated HPr (P-Ser-HPr). The two antagonistic activities of HprK/P are regulated by several intracellular metabolites, which change their concentration in response to the absence or presence of rapidly metabolisable carbon sources (glucose, fructose, etc.) in the growth medium. Therefore, by controlling the phosphorylation state of HPr, the HPrK/P is a sensor enzyme that plays a major role in the regulation of carbon metabolism and sugar transport: it probably mediates carbon catabolite repression (CCR), and regulates PTS-catalyzed carbohydrate uptake and inducer exclusion. This chain is HPr kinase/phosphorylase (hprK), found in Streptococcus equinus (Streptococcus bovis).